Consider the following 169-residue polypeptide: Putative hydrogenase maturation protease MJ0631 (169 aa).

Belongs to the peptidase A31 family.

The protein is Putative hydrogenase maturation protease MJ0631 of Methanocaldococcus jannaschii (strain ATCC 43067 / DSM 2661 / JAL-1 / JCM 10045 / NBRC 100440) (Methanococcus jannaschii).